The primary structure comprises 327 residues: GMP reductase (327 aa).

The Thioimidate intermediate role is filled by C176. 205–228 is an NADP(+) binding site; that stretch reads IIADGGIRTHGDIAKSIRFGASMV.

It belongs to the IMPDH/GMPR family. GuaC type 2 subfamily.

It catalyses the reaction IMP + NH4(+) + NADP(+) = GMP + NADPH + 2 H(+). Catalyzes the irreversible NADPH-dependent deamination of GMP to IMP. It functions in the conversion of nucleobase, nucleoside and nucleotide derivatives of G to A nucleotides, and in maintaining the intracellular balance of A and G nucleotides. This is GMP reductase from Streptococcus agalactiae serotype V (strain ATCC BAA-611 / 2603 V/R).